Consider the following 590-residue polypeptide: Leishmanolysin (590 aa).

Positions 1–39 are cleaved as a signal peptide; the sequence is MSVDSSSTHRHRSVAARLVRLAAAGAAVIAAVGTAAAWA. Residues 40-87 constitute a propeptide, activation peptide; the sequence is HAGAVQHRCIHDAMQARVRQSVARHHTAPGAVSAVGLSYVTLGAAPTV. 2 cysteine pairs are disulfide-bonded: Cys112/Cys129 and Cys178/Cys217. His251 serves as a coordination point for Zn(2+). Residue Glu252 is part of the active site. His255 contacts Zn(2+). N-linked (GlcNAc...) asparagine glycosylation is present at Asn287. 7 cysteine pairs are disulfide-bonded: Cys301/Cys373, Cys380/Cys443, Cys393/Cys412, Cys402/Cys477, Cys454/Cys498, Cys503/Cys553, and Cys523/Cys546. His321 is a Zn(2+) binding site. A lipid anchor (GPI-anchor amidated asparagine) is attached at Asn565. The propeptide at 566–590 is removed in mature form; sequence AAAGRRGPRAAATALLVAALLAVAL.

Belongs to the peptidase M8 family. It depends on Zn(2+) as a cofactor.

The protein localises to the cell membrane. The enzyme catalyses Preference for hydrophobic residues at P1 and P1' and basic residues at P2' and P3'. A model nonapeptide is cleaved at -Ala-Tyr-|-Leu-Lys-Lys-.. Functionally, has an integral role during the infection of macrophages in the mammalian host. In Leishmania donovani, this protein is Leishmanolysin (gp63).